Here is a 122-residue protein sequence, read N- to C-terminus: MYVQEHRLWGLMDKPHSAPCLMSLSLSFLICNKGRNAIRVQQSTDERMDAMLLRQCPTQGTRKNHESNSSLHHVPNWIFHSTIIPPNKGSKRCLRKVDWLLPRAGGVGGKRGVTADGDRVSF.

The protein belongs to the FAM223 family.

In Homo sapiens (Human), this protein is Protein FAM223B (FAM223B).